Consider the following 417-residue polypeptide: Serine hydroxymethyltransferase (417 aa).

(6S)-5,6,7,8-tetrahydrofolate-binding positions include Leu121 and 125 to 127 (GHL). Lys229 is modified (N6-(pyridoxal phosphate)lysine). 355–357 (SPF) contributes to the (6S)-5,6,7,8-tetrahydrofolate binding site.

This sequence belongs to the SHMT family. Homodimer. Pyridoxal 5'-phosphate is required as a cofactor.

The protein localises to the cytoplasm. It catalyses the reaction (6R)-5,10-methylene-5,6,7,8-tetrahydrofolate + glycine + H2O = (6S)-5,6,7,8-tetrahydrofolate + L-serine. It functions in the pathway one-carbon metabolism; tetrahydrofolate interconversion. Its pathway is amino-acid biosynthesis; glycine biosynthesis; glycine from L-serine: step 1/1. Catalyzes the reversible interconversion of serine and glycine with tetrahydrofolate (THF) serving as the one-carbon carrier. This reaction serves as the major source of one-carbon groups required for the biosynthesis of purines, thymidylate, methionine, and other important biomolecules. Also exhibits THF-independent aldolase activity toward beta-hydroxyamino acids, producing glycine and aldehydes, via a retro-aldol mechanism. This Edwardsiella ictaluri (strain 93-146) protein is Serine hydroxymethyltransferase.